A 448-amino-acid chain; its full sequence is MSPLECSECFGDQLLHRTYTWQLTLHSRPNYTRKRDTRSESLEIPISVVLPQRGTAEPFPRLHNLYSTPRCAQQAALPRLSRRMASQHSYPLNRFSSVPLDPMERPMSQADLELDYNPPRVQLSDEMFVFQDGRWVNENCRLQSPYFSPSASFHHKLHHKRLAKECMLQEENKSLREENKALREENRMLSKENKILQVFWEEHKASLGREESRAPSPLLHKDSASLEVVKKDHVALQVPRGKEDSTLQLLREENRALQQLLEQKQAYWAQAEDTAAPAEESKPAPSPHEEPCSPGLLQDQGSGLSSRFEEPKGPPARQEDSKELRALRKMVSNMSGPSGEEEAKVGPGLPDGCQPLQLLREMRQALQALLKENRLLQEENRTLQVLRAEHRGFQEENKALWENNKLKLQQKLVIDTVTEVTARMEMLIEELYAFMPARSQDPKKPSRV.

Phosphoserine is present on residues S41, S86, S89, S97, S124, S144, S148, and S150. Positions 164-198 form a coiled coil; it reads KECMLQEENKSLREENKALREENRMLSKENKILQV. Phosphoserine is present on residues S212 and S225. Residues 242 to 267 are a coiled coil; the sequence is KEDSTLQLLREENRALQQLLEQKQAY. The interval 270-323 is disordered; it reads QAEDTAAPAEESKPAPSPHEEPCSPGLLQDQGSGLSSRFEEPKGPPARQEDSKE. Basic and acidic residues-rich tracts occupy residues 279 to 291 and 307 to 323; these read EESKPAPSPHEEP and RFEEPKGPPARQEDSKE. 2 positions are modified to phosphoserine: S335 and S338. A coiled-coil region spans residues 356–414; sequence LQLLREMRQALQALLKENRLLQEENRTLQVLRAEHRGFQEENKALWENNKLKLQQKLVI.

The protein belongs to the chibby family. SPERT subfamily. Homodimer. Binds to NEK1. In terms of tissue distribution, testis-specific.

The sequence is that of Protein chibby homolog 2 from Homo sapiens (Human).